The primary structure comprises 342 residues: Anthranilate phosphoribosyltransferase (342 aa).

5-phospho-alpha-D-ribose 1-diphosphate-binding positions include glycine 79, 82 to 83 (GD), threonine 87, 89 to 92 (NVST), 107 to 115 (KHGNRSVSS), and serine 119. Residue glycine 79 coordinates anthranilate. Serine 91 is a Mg(2+) binding site. Asparagine 110 is an anthranilate binding site. Arginine 165 provides a ligand contact to anthranilate. Residues aspartate 223 and glutamate 224 each contribute to the Mg(2+) site.

This sequence belongs to the anthranilate phosphoribosyltransferase family. As to quaternary structure, homodimer. Requires Mg(2+) as cofactor.

It catalyses the reaction N-(5-phospho-beta-D-ribosyl)anthranilate + diphosphate = 5-phospho-alpha-D-ribose 1-diphosphate + anthranilate. It participates in amino-acid biosynthesis; L-tryptophan biosynthesis; L-tryptophan from chorismate: step 2/5. In terms of biological role, catalyzes the transfer of the phosphoribosyl group of 5-phosphorylribose-1-pyrophosphate (PRPP) to anthranilate to yield N-(5'-phosphoribosyl)-anthranilate (PRA). The protein is Anthranilate phosphoribosyltransferase of Aeromonas hydrophila subsp. hydrophila (strain ATCC 7966 / DSM 30187 / BCRC 13018 / CCUG 14551 / JCM 1027 / KCTC 2358 / NCIMB 9240 / NCTC 8049).